Reading from the N-terminus, the 92-residue chain is Large ribosomal subunit protein bL25 (92 aa).

It belongs to the bacterial ribosomal protein bL25 family. As to quaternary structure, part of the 50S ribosomal subunit; part of the 5S rRNA/L5/L18/L25 subcomplex. Contacts the 5S rRNA. Binds to the 5S rRNA independently of L5 and L18.

Its function is as follows. This is one of the proteins that binds to the 5S RNA in the ribosome where it forms part of the central protuberance. The sequence is that of Large ribosomal subunit protein bL25 from Aliivibrio salmonicida (strain LFI1238) (Vibrio salmonicida (strain LFI1238)).